Reading from the N-terminus, the 330-residue chain is MKKSFIHQQEEISFVKNTFTQYLIAKLDVVEVQGPILSRVGDGMQDNLSGTENPVSVNVLKIPNATFEVVHSLAKWKRHTLARFGFNEGEGLVVNMKALRPDEDSLDQTHSVYVDQWDWEKVIPDGKRNLAYLKETVETIYKVIRLTELAVEARYDIEAVLPKKITFIHTEELVAKYPDLTPKERENAITKVFGAVFLIGIGGVLPDGKPHDGRAPDYDDWTTETENGYHGLNGDILVWNDQLGSAFELSSMGIRVDEEALKRQVEMTGDQDRLAFDWHKSLLNGLFPLTIGGGIGQSRMVMFLLRKQHIGEVQTSVWPQEVRDSYDNIL.

Belongs to the class-II aminoacyl-tRNA synthetase family. AsnA subfamily.

It localises to the cytoplasm. The enzyme catalyses L-aspartate + NH4(+) + ATP = L-asparagine + AMP + diphosphate + H(+). The protein operates within amino-acid biosynthesis; L-asparagine biosynthesis; L-asparagine from L-aspartate (ammonia route): step 1/1. This is Aspartate--ammonia ligase from Streptococcus pyogenes serotype M2 (strain MGAS10270).